Reading from the N-terminus, the 140-residue chain is FK506-binding protein 2 (140 aa).

Positions 1–19 (MKFTTGLSVLLFFVLQVFA) are cleaved as a signal peptide. Positions 43 to 132 (GDVVSVHYTG…IFETELVDIQ (90 aa)) constitute a PPIase FKBP-type domain.

Belongs to the FKBP-type PPIase family. FKBP2 subfamily.

It localises to the endoplasmic reticulum. The enzyme catalyses [protein]-peptidylproline (omega=180) = [protein]-peptidylproline (omega=0). Inhibited by both FK506 and rapamycin. PPIases accelerate the folding of proteins. It catalyzes the cis-trans isomerization of proline imidic peptide bonds in oligopeptides. The protein is FK506-binding protein 2 (FPR2) of Kluyveromyces lactis (strain ATCC 8585 / CBS 2359 / DSM 70799 / NBRC 1267 / NRRL Y-1140 / WM37) (Yeast).